Here is a 231-residue protein sequence, read N- to C-terminus: Endonuclease NucS (231 aa).

It belongs to the NucS endonuclease family.

The protein localises to the cytoplasm. Cleaves both 3' and 5' ssDNA extremities of branched DNA structures. The protein is Endonuclease NucS of Kocuria rhizophila (strain ATCC 9341 / DSM 348 / NBRC 103217 / DC2201).